We begin with the raw amino-acid sequence, 495 residues long: Probable aminotransferase ACS12 (495 aa).

Lys334 is modified (N6-(pyridoxal phosphate)lysine).

Belongs to the class-I pyridoxal-phosphate-dependent aminotransferase family. As to quaternary structure, homodimer. The cofactor is pyridoxal 5'-phosphate. Expressed in roots. Expressed at low level in leaves, stems, flowers and siliques.

Probable aminotransferase. Does not have 1-aminocyclopropane-1-carboxylate synthase (ACS) activity, suggesting that it is not involved in ethylene biosynthesis. This is Probable aminotransferase ACS12 (ACS12) from Arabidopsis thaliana (Mouse-ear cress).